The chain runs to 93 residues: U12-lycotoxin-Ls1b (93 aa).

Residues 1–18 (MKFAVILLFSLVVLAVAS) form the signal peptide. Residues 19-38 (ESVEEVRREIDIEDLPEQQR) constitute a propeptide that is removed on maturation.

The protein belongs to the neurotoxin 31 family. Contains 5 disulfide bonds. As to expression, expressed by the venom gland.

The protein resides in the secreted. The polypeptide is U12-lycotoxin-Ls1b (Lycosa singoriensis (Wolf spider)).